Reading from the N-terminus, the 410-residue chain is Large ribosomal subunit protein uL4 (410 aa).

This sequence belongs to the universal ribosomal protein uL4 family.

The protein resides in the cytoplasm. The sequence is that of Large ribosomal subunit protein uL4 (RPL4) from Tetrahymena thermophila (strain SB210).